A 220-amino-acid chain; its full sequence is Type-4 uracil-DNA glycosylase (220 aa).

[4Fe-4S] cluster is bound by residues cysteine 14 and cysteine 17. Uracil contacts are provided by residues 41 to 43 (GEA), phenylalanine 55, and asparagine 82. Cysteine 86 and cysteine 102 together coordinate [4Fe-4S] cluster. Histidine 164 serves as a coordination point for uracil.

This sequence belongs to the uracil-DNA glycosylase (UDG) superfamily. Type 4 (UDGa) family.

The enzyme catalyses Hydrolyzes single-stranded DNA or mismatched double-stranded DNA and polynucleotides, releasing free uracil.. Its function is as follows. Removes uracil bases that are present in DNA as a result of either deamination of cytosine or misincorporation of dUMP instead of dTMP. In Sulfurisphaera tokodaii (strain DSM 16993 / JCM 10545 / NBRC 100140 / 7) (Sulfolobus tokodaii), this protein is Type-4 uracil-DNA glycosylase.